Consider the following 588-residue polypeptide: D-3-phosphoglycerate dehydrogenase 3, chloroplastic (588 aa).

The transit peptide at 1-38 (MATSLNLSSIFSSSSRLVTTPSSVFPIRQRRRIILVTS) directs the protein to the chloroplast. NAD(+)-binding positions include 195-196 (KV), aspartate 215, 274-276 (VAR), and aspartate 300. Arginine 276 is an active-site residue. Residue glutamate 305 is part of the active site. Residue histidine 324 is the Proton donor of the active site. 324 to 327 (HLGA) contacts NAD(+). Residues 516 to 588 (VILCRQVDQP…AIEEFVFLKL (73 aa)) form the ACT domain.

The protein belongs to the D-isomer specific 2-hydroxyacid dehydrogenase family. In terms of tissue distribution, expressed in aerial parts. Not detected in roots and meristematic tissue. Expressed in cotyledons, adult leaves, stigma and anther filaments. Detected in the embryo.

The protein resides in the plastid. The protein localises to the chloroplast. It carries out the reaction (2R)-3-phosphoglycerate + NAD(+) = 3-phosphooxypyruvate + NADH + H(+). It functions in the pathway amino-acid biosynthesis; L-serine biosynthesis; L-serine from 3-phospho-D-glycerate: step 1/3. Partially inhibited by 1 mM serine. Its function is as follows. Involved in the plastidial phosphorylated pathway of serine biosynthesis (PPSB). The sequence is that of D-3-phosphoglycerate dehydrogenase 3, chloroplastic (PGDH3) from Arabidopsis thaliana (Mouse-ear cress).